Consider the following 376-residue polypeptide: 23S rRNA (uracil(747)-C(5))-methyltransferase RlmC (376 aa).

The [4Fe-4S] cluster site is built by Cys-3, Cys-11, Cys-14, and Cys-87. Residues Gln-212, Phe-241, Glu-262, and Asn-307 each contribute to the S-adenosyl-L-methionine site. Cys-334 acts as the Nucleophile in catalysis.

This sequence belongs to the class I-like SAM-binding methyltransferase superfamily. RNA M5U methyltransferase family. RlmC subfamily.

It carries out the reaction uridine(747) in 23S rRNA + S-adenosyl-L-methionine = 5-methyluridine(747) in 23S rRNA + S-adenosyl-L-homocysteine + H(+). Catalyzes the formation of 5-methyl-uridine at position 747 (m5U747) in 23S rRNA. The sequence is that of 23S rRNA (uracil(747)-C(5))-methyltransferase RlmC from Salmonella typhimurium (strain LT2 / SGSC1412 / ATCC 700720).